The sequence spans 182 residues: Succinate dehydrogenase [ubiquinone] cytochrome b small subunit, mitochondrial (182 aa).

Over 1–71 (MSLSLLLRGA…SAPRMASAGS (71 aa)) the chain is Mitochondrial matrix. The helical transmembrane segment at 72–96 (SHTLLWTVERIVSAGLLAVIPAAFI) threads the bilayer. The Mitochondrial intermembrane segment spans residues 97 to 101 (APSQV). A helical transmembrane segment spans residues 102–122 (LDALMAISVVIHTHWGVEAMV). Residue H113 coordinates heme. Over 123 to 135 (VDYMRPSVVGNVL) the chain is Mitochondrial matrix. Y125 contacts a ubiquinone. The helical transmembrane segment at 136 to 157 (PKVAHIALIIISVATLGGLFYF) threads the bilayer. Over 158 to 182 (IQNDVGLANGIKRFWAIKGKDAEKA) the chain is Mitochondrial intermembrane.

The protein belongs to the CybS family. Forms part of complex II containing four subunits: a flavoprotein (FP), an iron-sulfur protein (IP) and a cytochrome b composed of a large and a small subunit.

The protein resides in the mitochondrion inner membrane. It functions in the pathway carbohydrate metabolism; tricarboxylic acid cycle. In terms of biological role, membrane-anchoring subunit of succinate dehydrogenase (SDH) that is involved in complex II of the mitochondrial electron transport chain and is responsible for transferring electrons from succinate to ubiquinone (coenzyme Q). The chain is Succinate dehydrogenase [ubiquinone] cytochrome b small subunit, mitochondrial from Drosophila melanogaster (Fruit fly).